A 991-amino-acid chain; its full sequence is Envelope glycoprotein gp160 (991 aa).

A signal peptide spans 1–106 (MTSKESKPSR…CLMWEMRKGN (106 aa)). The Extracellular segment spans residues 107–840 (QCQAEEVIAL…WSSWFSWLKY (734 aa)). 22 N-linked (GlcNAc...) asparagine; by host glycosylation sites follow: Asn-140, Asn-161, Asn-206, Asn-258, Asn-298, Asn-364, Asn-381, Asn-387, Asn-403, Asn-435, Asn-439, Asn-470, Asn-475, Asn-481, Asn-491, Asn-501, Asn-515, Asn-527, Asn-537, Asn-542, Asn-543, and Asn-568. The interval 665–685 (GIGLVIVLAIMAIIAAAGAGL) is fusion peptide. Positions 697–747 (RTAVQSLANATAAQQEVLEASYAMVQHIAKGIRILEARVARVEALVDRMMV) form a coiled coil. Asn-705 carries an N-linked (GlcNAc...) asparagine; by host glycan. An immunosuppression region spans residues 731–747 (LEARVARVEALVDRMMV). Residues Asn-773, Asn-780, Asn-796, and Asn-830 are each glycosylated (N-linked (GlcNAc...) asparagine; by host). Residues 788-823 (EEIEQHEGNLSLLLREAALQVHIAQRDARRIPDAWK) adopt a coiled-coil conformation. A helical membrane pass occupies residues 841–861 (VPWIIMGIVGLICFRILMCVI). The Cytoplasmic segment spans residues 862-991 (SMCLQAYKQV…PTLENDYVEL (130 aa)). The S-palmitoyl cysteine; by host moiety is linked to residue Cys-864.

As to quaternary structure, the mature envelope protein (Env) consists of a trimer of SU-TM heterodimers attached by noncovalent interactions or by a labile interchain disulfide bond. Post-translationally, specific enzymatic cleavages in vivo yield mature proteins. Envelope glycoproteins are synthesized as an inactive precursor that is N-glycosylated and processed likely by host cell furin or by a furin-like protease in the Golgi to yield the mature SU and TM proteins. The cleavage site between SU and TM requires the minimal sequence [KR]-X-[KR]-R. In terms of processing, the transmembrane protein is palmitoylated.

The protein localises to the virion membrane. Its subcellular location is the host cell membrane. Functionally, the surface protein (SU) attaches the virus to the host cell by binding to its receptor. This interaction triggers the refolding of the transmembrane protein (TM) and is thought to activate its fusogenic potential by unmasking its fusion peptide. Fusion occurs at the host cell plasma membrane. The transmembrane protein (TM) acts as a class I viral fusion protein. Under the current model, the protein has at least 3 conformational states: pre-fusion native state, pre-hairpin intermediate state, and post-fusion hairpin state. During viral and target cell membrane fusion, the coiled coil regions (heptad repeats) assume a trimer-of-hairpins structure, positioning the fusion peptide in close proximity to the C-terminal region of the ectodomain. The formation of this structure appears to drive apposition and subsequent fusion of viral and target cell membranes. Membranes fusion leads to delivery of the nucleocapsid into the cytoplasm. This chain is Envelope glycoprotein gp160 (env), found in Ovis aries (Sheep).